Here is a 418-residue protein sequence, read N- to C-terminus: Hydroxysteroid dehydrogenase-like protein 2 (418 aa).

Residues 17–23, K42, and D74 each bind NADP(+); that span reads GASRGIG. K42 carries the post-translational modification N6-(2-hydroxyisobutyryl)lysine. K116 is subject to N6-acetyllysine. Y168 acts as the Proton acceptor in catalysis. K172 provides a ligand contact to NADP(+). Residues 287–310 form a disordered region; the sequence is STGAVPEFKEEKPQPQPKPRSGAV. The SCP2 domain occupies 306-415; the sequence is RSGAVEETFR…KLEKLMNQMN (110 aa). The residue at position 318 (K318) is an N6-succinyllysine.

The protein belongs to the short-chain dehydrogenases/reductases (SDR) family.

The protein resides in the peroxisome. Its subcellular location is the mitochondrion. In terms of biological role, has apparently no steroid dehydrogenase activity. Controls bile acid (BA) and lipid metabolism in response to nutritional cues. The sequence is that of Hydroxysteroid dehydrogenase-like protein 2 (HSDL2) from Pongo abelii (Sumatran orangutan).